The primary structure comprises 493 residues: Probable cytosol aminopeptidase (493 aa).

Positions 259 and 264 each coordinate Mn(2+). K271 is a catalytic residue. Residues D282, D341, and E343 each coordinate Mn(2+). R345 is an active-site residue.

Belongs to the peptidase M17 family. Mn(2+) serves as cofactor.

It localises to the cytoplasm. The enzyme catalyses Release of an N-terminal amino acid, Xaa-|-Yaa-, in which Xaa is preferably Leu, but may be other amino acids including Pro although not Arg or Lys, and Yaa may be Pro. Amino acid amides and methyl esters are also readily hydrolyzed, but rates on arylamides are exceedingly low.. It catalyses the reaction Release of an N-terminal amino acid, preferentially leucine, but not glutamic or aspartic acids.. Functionally, presumably involved in the processing and regular turnover of intracellular proteins. Catalyzes the removal of unsubstituted N-terminal amino acids from various peptides. The sequence is that of Probable cytosol aminopeptidase from Bacillus cytotoxicus (strain DSM 22905 / CIP 110041 / 391-98 / NVH 391-98).